The following is a 102-amino-acid chain: Small ribosomal subunit protein uS10 (102 aa).

Belongs to the universal ribosomal protein uS10 family. Part of the 30S ribosomal subunit.

In terms of biological role, involved in the binding of tRNA to the ribosomes. This chain is Small ribosomal subunit protein uS10, found in Parvibaculum lavamentivorans (strain DS-1 / DSM 13023 / NCIMB 13966).